The chain runs to 487 residues: 3-octaprenyl-4-hydroxybenzoate carboxy-lyase (487 aa).

Asn-172 contributes to the Mn(2+) binding site. Residues 175–177, 189–191, and 194–195 contribute to the prenylated FMN site; these read IYR, RWL, and RG. Glu-238 is a binding site for Mn(2+). The active-site Proton donor is the Asp-287.

Belongs to the UbiD family. As to quaternary structure, homohexamer. The cofactor is prenylated FMN. Mn(2+) is required as a cofactor.

Its subcellular location is the cell membrane. The enzyme catalyses a 4-hydroxy-3-(all-trans-polyprenyl)benzoate + H(+) = a 2-(all-trans-polyprenyl)phenol + CO2. It participates in cofactor biosynthesis; ubiquinone biosynthesis. Catalyzes the decarboxylation of 3-octaprenyl-4-hydroxy benzoate to 2-octaprenylphenol, an intermediate step in ubiquinone biosynthesis. The protein is 3-octaprenyl-4-hydroxybenzoate carboxy-lyase of Nitrosospira multiformis (strain ATCC 25196 / NCIMB 11849 / C 71).